Reading from the N-terminus, the 488-residue chain is Ribulose bisphosphate carboxylase large chain (488 aa).

2 residues coordinate substrate: N128 and T178. K180 acts as the Proton acceptor in catalysis. K182 contacts substrate. Mg(2+) is bound by residues K206, D208, and E209. Position 206 is an N6-carboxylysine (K206). The Proton acceptor role is filled by H298. 3 residues coordinate substrate: R299, H331, and S383.

This sequence belongs to the RuBisCO large chain family. Type I subfamily. As to quaternary structure, heterohexadecamer of 8 large chains and 8 small chains. Mg(2+) is required as a cofactor.

It catalyses the reaction 2 (2R)-3-phosphoglycerate + 2 H(+) = D-ribulose 1,5-bisphosphate + CO2 + H2O. The catalysed reaction is D-ribulose 1,5-bisphosphate + O2 = 2-phosphoglycolate + (2R)-3-phosphoglycerate + 2 H(+). In terms of biological role, ruBisCO catalyzes two reactions: the carboxylation of D-ribulose 1,5-bisphosphate, the primary event in carbon dioxide fixation, as well as the oxidative fragmentation of the pentose substrate. Both reactions occur simultaneously and in competition at the same active site. The sequence is that of Ribulose bisphosphate carboxylase large chain from Xanthobacter autotrophicus (strain ATCC BAA-1158 / Py2).